Reading from the N-terminus, the 269-residue chain is Pertussis toxin subunit 1 homolog (269 aa).

A signal peptide spans 1–34; it reads MRCTRAIRQTARTGWLTWLAILAVTAPMTSPAWA.

Belongs to the bacterial exotoxin subunit A family.

The polypeptide is Pertussis toxin subunit 1 homolog (ptxA) (Bordetella parapertussis (strain 12822 / ATCC BAA-587 / NCTC 13253)).